The sequence spans 139 residues: Bilirubin-inducible fluorescent protein UnaG (139 aa).

(4Z,15Z)-bilirubin IXalpha-binding positions include N57, T61, S80, R112, and 132–134 (RSY).

The protein belongs to the calycin superfamily. Fatty-acid binding protein (FABP) family. Monomer. In terms of tissue distribution, detected in small-diameter muscle fibers from the white muscle layer from juvenile animals (glass eels) (at protein level). Detected in small-diameter muscle fibers from juvenile animals (glass eels).

Its subcellular location is the cytoplasm. Functionally, beta-barrel protein that binds unconjugated bilirubin with high affinity. Excitation of the bilirubin-bound protein gives rise to green fluorescence, both under normoxia and hypoxia. The apoprotein is not fluorescent. Does not emit fluorescence in the presence of ditauro-bilirubin, urobilin or biliverdin. The polypeptide is Bilirubin-inducible fluorescent protein UnaG (Anguilla japonica (Japanese eel)).